Consider the following 84-residue polypeptide: Small ribosomal subunit protein bS18 (84 aa).

The protein belongs to the bacterial ribosomal protein bS18 family. In terms of assembly, part of the 30S ribosomal subunit. Forms a tight heterodimer with protein bS6.

In terms of biological role, binds as a heterodimer with protein bS6 to the central domain of the 16S rRNA, where it helps stabilize the platform of the 30S subunit. The sequence is that of Small ribosomal subunit protein bS18 from Mycobacterium sp. (strain JLS).